The following is a 152-amino-acid chain: Cyanate hydratase (152 aa).

Residues Arg-98, Glu-101, and Ser-124 contribute to the active site.

It belongs to the cyanase family.

The enzyme catalyses cyanate + hydrogencarbonate + 3 H(+) = NH4(+) + 2 CO2. In terms of biological role, catalyzes the reaction of cyanate with bicarbonate to produce ammonia and carbon dioxide. This Uncinocarpus reesii (strain UAMH 1704) protein is Cyanate hydratase.